The chain runs to 245 residues: 2,3-bisphosphoglycerate-dependent phosphoglycerate mutase (245 aa).

Residues 8–15, 21–22, arginine 60, 87–90, lysine 98, 114–115, and 183–184 contribute to the substrate site; these read RHGQSLWN, TG, ERHY, RR, and GN. Histidine 9 acts as the Tele-phosphohistidine intermediate in catalysis. Residue glutamate 87 is the Proton donor/acceptor of the active site.

It belongs to the phosphoglycerate mutase family. BPG-dependent PGAM subfamily.

It carries out the reaction (2R)-2-phosphoglycerate = (2R)-3-phosphoglycerate. The protein operates within carbohydrate degradation; glycolysis; pyruvate from D-glyceraldehyde 3-phosphate: step 3/5. In terms of biological role, catalyzes the interconversion of 2-phosphoglycerate and 3-phosphoglycerate. This is 2,3-bisphosphoglycerate-dependent phosphoglycerate mutase from Bacillus cereus (strain ZK / E33L).